The sequence spans 251 residues: Phosphoribosylaminoimidazole-succinocarboxamide synthase (251 aa).

The protein belongs to the SAICAR synthetase family.

The catalysed reaction is 5-amino-1-(5-phospho-D-ribosyl)imidazole-4-carboxylate + L-aspartate + ATP = (2S)-2-[5-amino-1-(5-phospho-beta-D-ribosyl)imidazole-4-carboxamido]succinate + ADP + phosphate + 2 H(+). Its pathway is purine metabolism; IMP biosynthesis via de novo pathway; 5-amino-1-(5-phospho-D-ribosyl)imidazole-4-carboxamide from 5-amino-1-(5-phospho-D-ribosyl)imidazole-4-carboxylate: step 1/2. The protein is Phosphoribosylaminoimidazole-succinocarboxamide synthase of Phenylobacterium zucineum (strain HLK1).